Consider the following 120-residue polypeptide: Ubiquitin domain-containing protein TINCR (120 aa).

One can recognise a Ubiquitin-like domain in the interval 14–83 (YHIKVHLADE…LQDGSVLLLV (70 aa)).

In terms of tissue distribution, detected in stratum corneum (at protein level).

In Homo sapiens (Human), this protein is Ubiquitin domain-containing protein TINCR.